Here is a 710-residue protein sequence, read N- to C-terminus: Amyloid beta precursor protein binding family B member 1 (710 aa).

Polar residues predominate over residues 1-15 (MSVPSSLSQSAINAN). 4 disordered regions span residues 1–24 (MSVPSSLSQSAINANSHGGPALSL), 131–254 (GLRG…TDSD), 276–299 (GTTQWEPPGRASPSQGSSPQEESQ), and 340–365 (TFPAQSLSPEPLPQEEEKLPPRNTNP). Positions 145-173 (GPDEGEEKAAGEAEEEEEDDDDEEEEEDL) are enriched in acidic residues. At lysine 204 the chain carries N6-acetyllysine. Positions 223-234 (SWATLSQGSPSY) are enriched in polar residues. In terms of domain architecture, WW spans 253–285 (SDLPAGWMRVQDTSGTYYWHIPTGTTQWEPPGR). Residues 287 to 299 (SPSQGSSPQEESQ) are compositionally biased toward low complexity. The PID 1 domain maps to 370-509 (FAVRSLGWVE…SKIMAERRNA (140 aa)). Phosphoserine; by PKC is present on serine 459. Serine 517 carries the post-translational modification Phosphoserine. In terms of domain architecture, PID 2 spans 542-699 (KFQVYYLGNV…RRGVQSLWGS (158 aa)). Tyrosine 547 bears the Phosphotyrosine; by ABL1 mark. Serine 610 is subject to Phosphoserine; by SGK1. The residue at position 701 (lysine 701) is an N6-acetyllysine.

Component of a complex, at least composed of APBB1, RASD1/DEXRAS1 and APP. Interacts (via PID domain 2) with APP (with the intracellular domain of the amyloid-beta precursor protein). Interacts (via PID domain 2) with RASD1/DEXRAS1; impairs the transcription activation activity. Interacts (via PID domain 1) with KAT5/TIP60. Interacts (via the WW domain) with the proline-rich region of APBB1IP. Interacts with TSHZ1 and TSHZ2. Interacts (via the WW domain) with histone H2AX (when phosphorylated on 'Tyr-142') and the proline-rich region of ENAH. Interacts with MAPK8. Interacts (via PID domain 1) with TSHZ3 (via homeobox domain). Interacts with SET. Found in a trimeric complex with HDAC1 and TSHZ3; the interaction between HDAC1 and APBB1 is mediated by TSHZ3. Interacts (via WWW domain) with NEK6. Interacts (via WWW domain) with ABL1. Interacts with RNF157. Interacts with ARF6. Phosphorylation at Ser-610 by SGK1 promotes its localization to the nucleus. Phosphorylated following nuclear translocation. Phosphorylation at Tyr-547 by ABL1 enhances transcriptional activation activity and reduces the affinity for RASD1/DEXRAS1. Phosphorylated at Ser-459 by PKC upon insulin activation. Post-translationally, acetylation at Lys-204 and Lys-701 by KAT5 promotes its transcription activator activity. In terms of processing, polyubiquitination by RNF157 leads to degradation by the proteasome. Highly expressed in brain; strongly reduced in post-mortem elderly subjects with Alzheimer disease. In terms of tissue distribution, expressed preferentially in the brain.

It is found in the cell membrane. The protein resides in the cytoplasm. The protein localises to the nucleus. It localises to the cell projection. Its subcellular location is the growth cone. It is found in the nucleus speckle. Transcription coregulator that can have both coactivator and corepressor functions. Adapter protein that forms a transcriptionally active complex with the gamma-secretase-derived amyloid precursor protein (APP) intracellular domain. Plays a central role in the response to DNA damage by translocating to the nucleus and inducing apoptosis. May act by specifically recognizing and binding histone H2AX phosphorylated on 'Tyr-142' (H2AXY142ph) at double-strand breaks (DSBs), recruiting other pro-apoptosis factors such as MAPK8/JNK1. Required for histone H4 acetylation at double-strand breaks (DSBs). Its ability to specifically bind modified histones and chromatin modifying enzymes such as KAT5/TIP60, probably explains its transcription activation activity. Functions in association with TSHZ3, SET and HDAC factors as a transcriptional repressor, that inhibits the expression of CASP4. Associates with chromatin in a region surrounding the CASP4 transcriptional start site(s). Involved in hippocampal neurite branching and neuromuscular junction formation, as a result plays a role in spatial memory functioning. Plays a role in the maintenance of lens transparency. May play a role in muscle cell strength. Acts as a molecular adapter that functions in neurite outgrowth by activating the RAC1-ARF6 axis upon insulin treatment. The chain is Amyloid beta precursor protein binding family B member 1 from Homo sapiens (Human).